Here is a 158-residue protein sequence, read N- to C-terminus: Transcription elongation factor GreA (158 aa).

The stretch at Glu4–Ala75 forms a coiled coil.

The protein belongs to the GreA/GreB family.

Functionally, necessary for efficient RNA polymerase transcription elongation past template-encoded arresting sites. The arresting sites in DNA have the property of trapping a certain fraction of elongating RNA polymerases that pass through, resulting in locked ternary complexes. Cleavage of the nascent transcript by cleavage factors such as GreA or GreB allows the resumption of elongation from the new 3'terminus. GreA releases sequences of 2 to 3 nucleotides. In Bacillus anthracis (strain A0248), this protein is Transcription elongation factor GreA.